A 333-amino-acid polypeptide reads, in one-letter code: DNA-directed RNA polymerase subunit alpha (333 aa).

Positions 1–234 are alpha N-terminal domain (alpha-NTD); sequence MQSSVNEFLT…QQLAAFVDLK (234 aa). The alpha C-terminal domain (alpha-CTD) stretch occupies residues 248 to 333; it reads IDPILLRPVD…SLKKDDKATA (86 aa).

The protein belongs to the RNA polymerase alpha chain family. Homodimer. The RNAP catalytic core consists of 2 alpha, 1 beta, 1 beta' and 1 omega subunit. When a sigma factor is associated with the core the holoenzyme is formed, which can initiate transcription.

The catalysed reaction is RNA(n) + a ribonucleoside 5'-triphosphate = RNA(n+1) + diphosphate. Functionally, DNA-dependent RNA polymerase catalyzes the transcription of DNA into RNA using the four ribonucleoside triphosphates as substrates. The chain is DNA-directed RNA polymerase subunit alpha from Stutzerimonas stutzeri (strain A1501) (Pseudomonas stutzeri).